We begin with the raw amino-acid sequence, 239 residues long: 1-(5-phosphoribosyl)-5-[(5-phosphoribosylamino)methylideneamino] imidazole-4-carboxamide isomerase (239 aa).

Aspartate 8 serves as the catalytic Proton acceptor. Aspartate 129 acts as the Proton donor in catalysis.

The protein belongs to the HisA/HisF family.

The protein resides in the cytoplasm. The catalysed reaction is 1-(5-phospho-beta-D-ribosyl)-5-[(5-phospho-beta-D-ribosylamino)methylideneamino]imidazole-4-carboxamide = 5-[(5-phospho-1-deoxy-D-ribulos-1-ylimino)methylamino]-1-(5-phospho-beta-D-ribosyl)imidazole-4-carboxamide. It functions in the pathway amino-acid biosynthesis; L-histidine biosynthesis; L-histidine from 5-phospho-alpha-D-ribose 1-diphosphate: step 4/9. The chain is 1-(5-phosphoribosyl)-5-[(5-phosphoribosylamino)methylideneamino] imidazole-4-carboxamide isomerase from Bacillus cereus (strain ATCC 10987 / NRS 248).